Consider the following 611-residue polypeptide: Adenosylhomocysteinase 3 (611 aa).

Low complexity-rich tracts occupy residues 1–14 (MSVQ…AAKV), 40–57 (AMAP…APAA), and 68–78 (GPAAALSPAAG). The tract at residues 1 to 184 (MSVQVVSAAA…KQQKNSKGNS (184 aa)) is disordered. N-acetylserine is present on S2. The interval 2–109 (SVQVVSAAAA…DGGEALVSPD (108 aa)) is LISN domain, inhibits interaction with ITPR1. The residue at position 107 (S107) is a Phosphoserine. The span at 135–144 (RPTKIGRRSL) shows a compositional bias: basic residues. Residues 145–164 (SRSISQSSTDSYSSAASYTD) show a composition bias toward low complexity. Residues S149, S152, S155, and S158 each carry the phosphoserine modification. Substrate contacts are provided by T236, D310, and E335. Residue 336–338 (SVT) coordinates NAD(+). Positions 365 and 369 each coordinate substrate. NAD(+) contacts are provided by residues N370, 401-406 (GEVGKG), E422, N457, 478-479 (MG), and N525.

Belongs to the adenosylhomocysteinase family. Homotetramer. Forms heteromultimers with AHCYL1 (via the C-terminal region). Interacts with ITPR1; with lower affinity than AHCYL1 and maybe via ITPR1. Interacts with SLC4A4. Interacts with ZCCHC4. It depends on NAD(+) as a cofactor. In terms of processing, phosphorylated during neuronal differentiation at the LISN domain. In terms of tissue distribution, expressed in parotid and acinar cells (at protein level).

The protein resides in the cytoplasm. The protein localises to the microsome. It carries out the reaction S-adenosyl-L-homocysteine + H2O = L-homocysteine + adenosine. Its pathway is amino-acid biosynthesis; L-homocysteine biosynthesis; L-homocysteine from S-adenosyl-L-homocysteine: step 1/1. Its function is as follows. May regulate the electrogenic sodium/bicarbonate cotransporter SLC4A4 activity and Mg(2+)-sensitivity. On the contrary of its homolog AHCYL1, does not regulate ITPR1 sensitivity to inositol 1,4,5-trisphosphate. This Bos taurus (Bovine) protein is Adenosylhomocysteinase 3.